Here is a 347-residue protein sequence, read N- to C-terminus: MKNNNRPIFPFTAIVGQEEMKLALLLNIVDPKIGGVMIMGDRGTGKSTTIRALADLLPEIDIVANDPFNSHPTDIELMSDNVRQLKENGEEISLIQKKVPMIDLPLGATEDRVCGTIDIEKALTEGVKAFEPGLLAQANRGILYVDEVNLLDDHLVDILLDSAASGWNTVEREGISIRHPARFVLVGSGNPEEGELRPQLLDRFGMHAEIRTVKDPTLRVQIVEERSEFDRSPEDFLQEYKLQQEVLRQRIINAQQQLNNVQLNYEIKVKISQVCSELDVDGLRGDIVTNRAAKALAAFEGRDEVTVDDVLRIITLCLRHRLRKDPLEEIDSGQKVEKVFQRIFSNL.

41–48 (DRGTGKST) contributes to the ATP binding site.

Belongs to the Mg-chelatase subunits D/I family.

It is found in the plastid. Its subcellular location is the cyanelle. It carries out the reaction protoporphyrin IX + Mg(2+) + ATP + H2O = Mg-protoporphyrin IX + ADP + phosphate + 3 H(+). It participates in porphyrin-containing compound metabolism; chlorophyll biosynthesis. Its function is as follows. Involved in chlorophyll biosynthesis; introduces a magnesium ion into protoporphyrin IX to yield Mg-protoporphyrin IX. This is Magnesium-chelatase subunit ChlI (chlI) from Cyanophora paradoxa.